The sequence spans 473 residues: Ornithine decarboxylase (473 aa).

Lys106 is subject to N6-(pyridoxal phosphate)lysine. Residues Ser240, Gly277, and Glu313–Arg316 each bind pyridoxal 5'-phosphate. Position 367 to 368 (Phe367 to Asp368) interacts with substrate. Cys417 serves as the catalytic Proton donor; shared with dimeric partner. Residue Asp418 coordinates substrate. Tyr447 lines the pyridoxal 5'-phosphate pocket.

This sequence belongs to the Orn/Lys/Arg decarboxylase class-II family. As to quaternary structure, homodimer. Only the dimer is catalytically active, as the active sites are constructed of residues from both monomers. It depends on pyridoxal 5'-phosphate as a cofactor.

Its subcellular location is the cytoplasm. The enzyme catalyses L-ornithine + H(+) = putrescine + CO2. It functions in the pathway amine and polyamine biosynthesis; putrescine biosynthesis via L-ornithine pathway; putrescine from L-ornithine: step 1/1. Inhibited by antizyme (AZ) OAZ1 in response to polyamine levels. AZ inhibits the assembly of the functional homodimer by binding to ODC monomers and targeting them for ubiquitin-independent proteolytic destruction by the 26S proteasome. Functionally, catalyzes the first and rate-limiting step of polyamine biosynthesis that converts ornithine into putrescine, which is the precursor for the polyamines, spermidine and spermine. Polyamines are essential for cell proliferation and are implicated in cellular processes, ranging from DNA replication to apoptosis. In Candida albicans (strain SC5314 / ATCC MYA-2876) (Yeast), this protein is Ornithine decarboxylase (SPE1).